The primary structure comprises 299 residues: Proline iminopeptidase (299 aa).

One can recognise an AB hydrolase-1 domain in the interval 29–279 (PLLLLHGGPG…SRHMAFIDEP (251 aa)). The active-site Nucleophile is Ser105. Asp245 is an active-site residue. The active-site Proton donor is His272.

It belongs to the peptidase S33 family.

The protein localises to the cell envelope. The catalysed reaction is Release of N-terminal proline from a peptide.. In terms of biological role, releases the N-terminal proline from various substrates. This Levilactobacillus brevis (strain ATCC 367 / BCRC 12310 / CIP 105137 / JCM 1170 / LMG 11437 / NCIMB 947 / NCTC 947) (Lactobacillus brevis) protein is Proline iminopeptidase.